Reading from the N-terminus, the 488-residue chain is Protein nucleotidyltransferase YdiU (488 aa).

Positions 91, 93, 94, 114, 126, 127, 177, and 184 each coordinate ATP. The Proton acceptor role is filled by D253. Residues N254 and D263 each coordinate Mg(2+). Residue D263 participates in ATP binding.

The protein belongs to the SELO family. Mg(2+) serves as cofactor. It depends on Mn(2+) as a cofactor.

The catalysed reaction is L-seryl-[protein] + ATP = 3-O-(5'-adenylyl)-L-seryl-[protein] + diphosphate. It catalyses the reaction L-threonyl-[protein] + ATP = 3-O-(5'-adenylyl)-L-threonyl-[protein] + diphosphate. It carries out the reaction L-tyrosyl-[protein] + ATP = O-(5'-adenylyl)-L-tyrosyl-[protein] + diphosphate. The enzyme catalyses L-histidyl-[protein] + UTP = N(tele)-(5'-uridylyl)-L-histidyl-[protein] + diphosphate. The catalysed reaction is L-seryl-[protein] + UTP = O-(5'-uridylyl)-L-seryl-[protein] + diphosphate. It catalyses the reaction L-tyrosyl-[protein] + UTP = O-(5'-uridylyl)-L-tyrosyl-[protein] + diphosphate. In terms of biological role, nucleotidyltransferase involved in the post-translational modification of proteins. It can catalyze the addition of adenosine monophosphate (AMP) or uridine monophosphate (UMP) to a protein, resulting in modifications known as AMPylation and UMPylation. The polypeptide is Protein nucleotidyltransferase YdiU (Bacillus cereus (strain ZK / E33L)).